The chain runs to 132 residues: MKAIRANIPRALPTGARLVCADNTGARELEIIAVKGYKGVRRRYPAAGVGDIVVVTVKKGTPEIRKQVHYAVIVRQRKEYRRPDGTRVKFEDNAAVITNERGEPRGSEIRGAVAREAAERFSKIGTIASVIV.

The protein belongs to the universal ribosomal protein uL14 family. Part of the 50S ribosomal subunit. Forms a cluster with proteins L3 and L24e, part of which may contact the 16S rRNA in 2 intersubunit bridges.

Functionally, binds to 23S rRNA. Forms part of two intersubunit bridges in the 70S ribosome. The sequence is that of Large ribosomal subunit protein uL14 from Archaeoglobus fulgidus (strain ATCC 49558 / DSM 4304 / JCM 9628 / NBRC 100126 / VC-16).